Here is a 1657-residue protein sequence, read N- to C-terminus: Alsin (1657 aa).

3 RCC1 repeats span residues 60 to 109 (GEVY…VTDN), 110 to 168 (GVAY…LSIS), and 169 to 219 (REIW…LVQC). The interval 432–481 (TGAQAGSSAIGPEGLKDSREEQVKQESMQGKKSSSLVDIREEETEGGSRR) is disordered. Residues 445–455 (GLKDSREEQVK) are compositionally biased toward basic and acidic residues. Residues 456–467 (QESMQGKKSSSL) are compositionally biased toward polar residues. Phosphoserine is present on residues Ser-465, Ser-466, Ser-483, and Ser-492. Thr-510 is modified (phosphothreonine). RCC1 repeat units lie at residues 526–577 (TEVW…LTAK) and 578–628 (SQVY…LVDT). Lys-533 carries the post-translational modification N6-acetyllysine. A DH domain is found at 690 to 885 (GYIASLHELA…ECLALHLGRK (196 aa)). The 107-residue stretch at 901-1007 (GKMTDSLRKP…RAISQAVDQA (107 aa)) folds into the PH domain. MORN repeat units follow at residues 1049 to 1071 (YDGR…DGKM), 1072 to 1094 (YSGM…NKAM), 1100 to 1122 (YVGH…SGEV), 1123 to 1145 (FEGC…KLTS), 1151 to 1173 (FIGQ…TRGE), 1175 to 1197 (YMGM…FGLY), 1198 to 1220 (YEGN…DDTI), and 1221 to 1244 (YEGE…NGDY). Position 1335 is a phosphoserine (Ser-1335). The VPS9 domain maps to 1513–1657 (KQPDIALLGF…YYQIQREKLN (145 aa)).

Forms a heteromeric complex with ALS2CL. Interacts with ALS2CL.

May act as a GTPase regulator. Controls survival and growth of spinal motoneurons. The protein is Alsin (ALS2) of Pan troglodytes (Chimpanzee).